A 225-amino-acid polypeptide reads, in one-letter code: MRAITNSGWIEVVTGSMFSGKTEELLRRLRRAEIAGQSIAVFKPAVDDRYGETTVGSHVGRQWEAAVVPNEGEDIWNIKHELSKKKQNHRTTTQCRSGDGTNNPGGVIPSNDDSVDVVAIDEANFFSTELVSVCESLANDGYRVVVSGTDQTYRGEPFEPLPQLMAVAEYVDKLQAICTQCGEPATRNQRLVDDSPAHIDDPTIVVGADETYEARCRNCHILRHE.

15–22 is an ATP binding site; the sequence is GSMFSGKT. The tract at residues 85-110 is disordered; the sequence is KKQNHRTTTQCRSGDGTNNPGGVIPS. The span at 90–104 shows a compositional bias: polar residues; sequence RTTTQCRSGDGTNNP. Position 121-124 (121-124) interacts with ATP; the sequence is DEAN. Residue glutamate 122 is the Proton acceptor of the active site. Zn(2+) contacts are provided by cysteine 178, cysteine 181, cysteine 216, and cysteine 219.

This sequence belongs to the thymidine kinase family. As to quaternary structure, homotetramer.

It is found in the cytoplasm. The catalysed reaction is thymidine + ATP = dTMP + ADP + H(+). This chain is Thymidine kinase, found in Haloquadratum walsbyi (strain DSM 16790 / HBSQ001).